Reading from the N-terminus, the 309-residue chain is Protoheme IX farnesyltransferase (309 aa).

Transmembrane regions (helical) follow at residues 35 to 55 (IGIVNSNLITTFTGLWLALYF), 64 to 84 (LHIVFFTLFGSALVIAGSCSI), 114 to 134 (VLWLGIIFITVGTLSLLMTTV), 135 to 155 (TAAIVGLIGAITYIFLYTMWS), 161 to 181 (LNTVVGSISGAVPPVIGWTAV), 187 to 207 (VVPLVLFLIMFIWQTPHFLAL), 236 to 256 (IVVWVACLLPLPFYLFSLGVP), 257 to 277 (FLTVATLLNVGWLALGLYGFK), and 289 to 309 (FIYSLNYLTILFVAMVIATLW).

It belongs to the UbiA prenyltransferase family. Protoheme IX farnesyltransferase subfamily. As to quaternary structure, interacts with CtaA.

The protein resides in the cell membrane. It carries out the reaction heme b + (2E,6E)-farnesyl diphosphate + H2O = Fe(II)-heme o + diphosphate. It participates in porphyrin-containing compound metabolism; heme O biosynthesis; heme O from protoheme: step 1/1. Converts heme B (protoheme IX) to heme O by substitution of the vinyl group on carbon 2 of heme B porphyrin ring with a hydroxyethyl farnesyl side group. The protein is Protoheme IX farnesyltransferase of Geobacillus sp. (strain WCH70).